Consider the following 515-residue polypeptide: MKVVETVARLEAFRRARAPVAGVEMGLVMTMGALHEGHRSLIARARRENTVLVVSIFVNPTQFGSSEDLSRYPRPLEADLELCRHEGVDLVFAPPESELYPLGSGTKVVPDPALTEVMCGLSRPGHFSGVATVVAKVMNLVQPVRAYFGQKDAQQVAVIKSVCCDLNIGGRIVVCPTVHDPDGLALSSRNVYLSSAQRSTALALPRALDKAAHLWAGGERQASELERAVRSVLASEPGLEIEYVAAVDPERLAPRQDNAGPVLVAAAVRVGSTRLIDNVVLGQHHERRPIIAIDGPAGAGKSTLARRLAQRLGFLYIDTGAMYRAVTWRAMQERIDPLDGERLSALTRAVRIRLAPGYQSAFPTRVWVDGEEVTRAVRDEAVSLHVSAVSSHPGVRSELVAQQRRIGEAGGVILDGRDIGTHVFSRAELKIYLTASVEERALRRADDLKAKGLPVPDIEVLKEQIRSRDNQDMSRAYAPLRKADDAIEVNTDTFTVQDTLDRLLALYRDKVGGSV.

The tract at residues 1–279 (MKVVETVARL…VGSTRLIDNV (279 aa)) is pantoate--beta-alanine ligase. Residue 31–38 (MGALHEGH) participates in ATP binding. Residue His-38 is the Proton donor of the active site. Gln-62 serves as a coordination point for (R)-pantoate. Residue Gln-62 participates in beta-alanine binding. 149-152 (GQKD) serves as a coordination point for ATP. Gln-155 provides a ligand contact to (R)-pantoate. ATP contacts are provided by residues Val-178 and 186–189 (LSSR). The interval 280–515 (VLGQHHERRP…LYRDKVGGSV (236 aa)) is cytidylate kinase.

In the N-terminal section; belongs to the pantothenate synthetase family. The protein in the C-terminal section; belongs to the cytidylate kinase family. Type 1 subfamily.

It is found in the cytoplasm. The enzyme catalyses (R)-pantoate + beta-alanine + ATP = (R)-pantothenate + AMP + diphosphate + H(+). It catalyses the reaction CMP + ATP = CDP + ADP. It carries out the reaction dCMP + ATP = dCDP + ADP. The protein operates within cofactor biosynthesis; (R)-pantothenate biosynthesis; (R)-pantothenate from (R)-pantoate and beta-alanine: step 1/1. Functionally, catalyzes the condensation of pantoate with beta-alanine in an ATP-dependent reaction via a pantoyl-adenylate intermediate. In terms of biological role, catalyzes the transfer of a phosphate group from ATP to either CMP or dCMP to form CDP or dCDP and ADP, respectively. In Gloeobacter violaceus (strain ATCC 29082 / PCC 7421), this protein is Bifunctional pantoate ligase/cytidylate kinase.